Here is a 110-residue protein sequence, read N- to C-terminus: UPF0060 membrane protein Rpal_4363 (110 aa).

4 consecutive transmembrane segments (helical) span residues 4 to 24 (LLTF…FWAW), 31 to 51 (PLWL…LTLA), 59 to 79 (AYAA…WAIE), and 88 to 108 (VIGA…PRAL).

Belongs to the UPF0060 family.

It is found in the cell inner membrane. In Rhodopseudomonas palustris (strain TIE-1), this protein is UPF0060 membrane protein Rpal_4363.